Reading from the N-terminus, the 98-residue chain is Keratin-associated protein 3-1 (98 aa).

A2 is subject to N-acetylalanine. 4 tandem repeats follow at residues 3 to 7, 8 to 12, 47 to 51, and 55 to 59. The interval 3 to 59 is 4 X 5 AA repeats of C-C-X(3); that stretch reads CCAPRCCSVRTGPATTICSSDQFCRCGVCLPSTCPHDISLLQPTFCDNSPVPYHVPD.

Belongs to the KRTAP type 3 family. Interacts with wool keratins. Wool.

Its function is as follows. In the wool cortex, wool keratin intermediate filaments are embedded in an interfilamentous matrix, consisting of hair keratin-associated proteins (KRTAP), which are essential for the formation of a rigid and resistant wool shaft through their extensive disulfide bond cross-linking with abundant cysteine residues of wool keratins. The matrix proteins include the high-sulfur and high-glycine-tyrosine keratins. The protein is Keratin-associated protein 3-1 (KRTAP3-1) of Capra hircus (Goat).